The following is a 140-amino-acid chain: Ribosome-binding factor A (140 aa).

The protein belongs to the RbfA family. Monomer. Binds 30S ribosomal subunits, but not 50S ribosomal subunits or 70S ribosomes.

Its subcellular location is the cytoplasm. In terms of biological role, one of several proteins that assist in the late maturation steps of the functional core of the 30S ribosomal subunit. Associates with free 30S ribosomal subunits (but not with 30S subunits that are part of 70S ribosomes or polysomes). Required for efficient processing of 16S rRNA. May interact with the 5'-terminal helix region of 16S rRNA. This chain is Ribosome-binding factor A, found in Cereibacter sphaeroides (strain ATCC 17023 / DSM 158 / JCM 6121 / CCUG 31486 / LMG 2827 / NBRC 12203 / NCIMB 8253 / ATH 2.4.1.) (Rhodobacter sphaeroides).